A 187-amino-acid chain; its full sequence is Ribosome maturation factor RimM (187 aa).

The PRC barrel domain maps to 95–178 (DEDEFFYADL…GLVEDKDESL (84 aa)).

It belongs to the RimM family. Binds ribosomal protein uS19.

The protein localises to the cytoplasm. Functionally, an accessory protein needed during the final step in the assembly of 30S ribosomal subunit, possibly for assembly of the head region. Essential for efficient processing of 16S rRNA. May be needed both before and after RbfA during the maturation of 16S rRNA. It has affinity for free ribosomal 30S subunits but not for 70S ribosomes. This is Ribosome maturation factor RimM from Sinorhizobium fredii (strain NBRC 101917 / NGR234).